Reading from the N-terminus, the 409-residue chain is SPI-1 type 3 secretion system translocon protein SctB (409 aa).

A helical transmembrane segment spans residues 119–140 (ISGMSSSAVALLAAANTLMLTL). The span at 350–368 (ERSEQQISQVNNRVASTAS) shows a compositional bias: polar residues. Residues 350–378 (ERSEQQISQVNNRVASTASDEARESSRKS) are disordered.

The protein belongs to the SctB/SipC family. As to quaternary structure, the core secretion machinery of the T3SS is composed of approximately 20 different proteins, including cytoplasmic components, a base, an export apparatus and a needle. This subunit is involved in the formation of a pore, called the translocon, in host membrane.

It localises to the secreted. Its subcellular location is the host membrane. Component of the type III secretion system 1 (SPI-1 T3SS), also called injectisome, which is used to inject bacterial effector proteins into eukaryotic host cells. SipB/SctE1 and SipC/SctB1 are inserted into the host membrane where they form a pore and allow the translocation of effector proteins into the cytosol of target cells. In Salmonella typhi, this protein is SPI-1 type 3 secretion system translocon protein SctB.